The chain runs to 90 residues: MNKTQLIDFIAEKADLSKAQAKAALEATLDGVTDALKEGDQVQLIGFGTFKVNHRAARTGRNPKTGAEIQIAAANVPAFVAGKALKDAVK.

Belongs to the bacterial histone-like protein family. As to quaternary structure, heterodimer of an alpha and a beta chain.

In terms of biological role, histone-like DNA-binding protein which is capable of wrapping DNA to stabilize it, and thus to prevent its denaturation under extreme environmental conditions. The chain is DNA-binding protein HU-alpha (hupA) from Vibrio proteolyticus (Aeromonas proteolytica).